A 372-amino-acid polypeptide reads, in one-letter code: MSLEAIRYDEKNHTLTILDQLRLPHESEYVPINNSDDGWKAIKDMVVRGAPAIAIVAILSLAVELVHGGKVSRDQTRAEVGSFISDRLDYLNTSRPTAVNLSDAVGSFKKLVQTQTGSASELIEAFLSASHKMLLDDVQDNKNIGKYGLEWIQKNVPQAANGHKISALTICNTGSLATAGYGTALGIIRALHEAGVLERVYALETRPYNQGSRLTAYELVHDGIPATLVTDSMAAALLRKNKDIGVIIVGADRVVLNGDTANKIGTFQLSILANHFDRKFIVAAPTTSIDVQTKSGEDIEIEERPAIELTQVKGVDANKQPLTVSVAAPGIEVWNPAFDYAPYKLIDAIVTEKGVAEKTGGEFNLKEFKSAN.

Aspartate 252 functions as the Proton donor in the catalytic mechanism.

Belongs to the eIF-2B alpha/beta/delta subunits family. MtnA subfamily.

Its subcellular location is the cytoplasm. It is found in the nucleus. The enzyme catalyses 5-(methylsulfanyl)-alpha-D-ribose 1-phosphate = 5-(methylsulfanyl)-D-ribulose 1-phosphate. It participates in amino-acid biosynthesis; L-methionine biosynthesis via salvage pathway; L-methionine from S-methyl-5-thio-alpha-D-ribose 1-phosphate: step 1/6. Functionally, catalyzes the interconversion of methylthioribose-1-phosphate (MTR-1-P) into methylthioribulose-1-phosphate (MTRu-1-P). This is Methylthioribose-1-phosphate isomerase from Yarrowia lipolytica (strain CLIB 122 / E 150) (Yeast).